The chain runs to 662 residues: Glycogen debranching enzyme (662 aa).

D338 serves as the catalytic Nucleophile. E373 acts as the Proton donor in catalysis.

Belongs to the glycosyl hydrolase 13 family.

The catalysed reaction is Hydrolysis of (1-&gt;6)-alpha-D-glucosidic linkages to branches with degrees of polymerization of three or four glucose residues in limit dextrin.. It functions in the pathway glycan degradation; glycogen degradation. In terms of biological role, removes maltotriose and maltotetraose chains that are attached by 1,6-alpha-linkage to the limit dextrin main chain, generating a debranched limit dextrin. This Yersinia enterocolitica serotype O:8 / biotype 1B (strain NCTC 13174 / 8081) protein is Glycogen debranching enzyme.